Here is an 853-residue protein sequence, read N- to C-terminus: DNA mismatch repair protein MutS (853 aa).

614-621 is a binding site for ATP; it reads GPNMGGKS.

This sequence belongs to the DNA mismatch repair MutS family.

This protein is involved in the repair of mismatches in DNA. It is possible that it carries out the mismatch recognition step. This protein has a weak ATPase activity. The polypeptide is DNA mismatch repair protein MutS (Shigella flexneri serotype 5b (strain 8401)).